Here is a 153-residue protein sequence, read N- to C-terminus: Endoribonuclease YbeY (153 aa).

Zn(2+) contacts are provided by His118, His122, and His128.

The protein belongs to the endoribonuclease YbeY family. Zn(2+) is required as a cofactor.

It is found in the cytoplasm. Its function is as follows. Single strand-specific metallo-endoribonuclease involved in late-stage 70S ribosome quality control and in maturation of the 3' terminus of the 16S rRNA. This is Endoribonuclease YbeY from Staphylococcus saprophyticus subsp. saprophyticus (strain ATCC 15305 / DSM 20229 / NCIMB 8711 / NCTC 7292 / S-41).